We begin with the raw amino-acid sequence, 204 residues long: Ribonuclease HII (204 aa).

Residues 17–204 (QLVAGVDEVG…KPVQQLLQGD (188 aa)) form the RNase H type-2 domain. 3 residues coordinate a divalent metal cation: Asp23, Glu24, and Asp115.

It belongs to the RNase HII family. Mn(2+) is required as a cofactor. It depends on Mg(2+) as a cofactor.

The protein localises to the cytoplasm. It carries out the reaction Endonucleolytic cleavage to 5'-phosphomonoester.. Endonuclease that specifically degrades the RNA of RNA-DNA hybrids. This Hahella chejuensis (strain KCTC 2396) protein is Ribonuclease HII.